Consider the following 129-residue polypeptide: UPF0225 protein XOO0258 (129 aa).

It belongs to the UPF0225 family.

This Xanthomonas oryzae pv. oryzae (strain MAFF 311018) protein is UPF0225 protein XOO0258.